A 195-amino-acid polypeptide reads, in one-letter code: ATP-dependent Clp protease proteolytic subunit (195 aa).

S101 acts as the Nucleophile in catalysis. H126 is an active-site residue.

The protein belongs to the peptidase S14 family. As to quaternary structure, component of the chloroplastic Clp protease core complex.

The protein localises to the plastid. Its subcellular location is the chloroplast stroma. It carries out the reaction Hydrolysis of proteins to small peptides in the presence of ATP and magnesium. alpha-casein is the usual test substrate. In the absence of ATP, only oligopeptides shorter than five residues are hydrolyzed (such as succinyl-Leu-Tyr-|-NHMec, and Leu-Tyr-Leu-|-Tyr-Trp, in which cleavage of the -Tyr-|-Leu- and -Tyr-|-Trp bonds also occurs).. Its function is as follows. Cleaves peptides in various proteins in a process that requires ATP hydrolysis. Has a chymotrypsin-like activity. Plays a major role in the degradation of misfolded proteins. This is ATP-dependent Clp protease proteolytic subunit from Cucumis sativus (Cucumber).